Here is a 193-residue protein sequence, read N- to C-terminus: Holliday junction branch migration complex subunit RuvA (193 aa).

Residues 1-64 (MIGRIAGILL…EDANLLYGFL (64 aa)) form a domain I region. The interval 65–139 (TPQERTTFRE…GKLGADLGEL (75 aa)) is domain II. Positions 139–143 (LAGAA) are flexible linker. A domain III region spans residues 144 to 193 (SPSDHATDILNALLALGYSEKEGLAAIKNVPAGTGVSEGIKLALKALSKV).

This sequence belongs to the RuvA family. Homotetramer. Forms an RuvA(8)-RuvB(12)-Holliday junction (HJ) complex. HJ DNA is sandwiched between 2 RuvA tetramers; dsDNA enters through RuvA and exits via RuvB. An RuvB hexamer assembles on each DNA strand where it exits the tetramer. Each RuvB hexamer is contacted by two RuvA subunits (via domain III) on 2 adjacent RuvB subunits; this complex drives branch migration. In the full resolvosome a probable DNA-RuvA(4)-RuvB(12)-RuvC(2) complex forms which resolves the HJ.

The protein localises to the cytoplasm. In terms of biological role, the RuvA-RuvB-RuvC complex processes Holliday junction (HJ) DNA during genetic recombination and DNA repair, while the RuvA-RuvB complex plays an important role in the rescue of blocked DNA replication forks via replication fork reversal (RFR). RuvA specifically binds to HJ cruciform DNA, conferring on it an open structure. The RuvB hexamer acts as an ATP-dependent pump, pulling dsDNA into and through the RuvAB complex. HJ branch migration allows RuvC to scan DNA until it finds its consensus sequence, where it cleaves and resolves the cruciform DNA. The sequence is that of Holliday junction branch migration complex subunit RuvA from Burkholderia lata (strain ATCC 17760 / DSM 23089 / LMG 22485 / NCIMB 9086 / R18194 / 383).